Consider the following 87-residue polypeptide: Small ribosomal subunit protein uS17 (87 aa).

Belongs to the universal ribosomal protein uS17 family. In terms of assembly, part of the 30S ribosomal subunit.

Functionally, one of the primary rRNA binding proteins, it binds specifically to the 5'-end of 16S ribosomal RNA. In Geobacillus sp. (strain WCH70), this protein is Small ribosomal subunit protein uS17.